Reading from the N-terminus, the 314-residue chain is Ribosomal RNA small subunit methyltransferase H (314 aa).

Residues 35-37 (GGH), aspartate 54, phenylalanine 83, aspartate 104, and glutamine 111 contribute to the S-adenosyl-L-methionine site.

The protein belongs to the methyltransferase superfamily. RsmH family.

Its subcellular location is the cytoplasm. It catalyses the reaction cytidine(1402) in 16S rRNA + S-adenosyl-L-methionine = N(4)-methylcytidine(1402) in 16S rRNA + S-adenosyl-L-homocysteine + H(+). In terms of biological role, specifically methylates the N4 position of cytidine in position 1402 (C1402) of 16S rRNA. This is Ribosomal RNA small subunit methyltransferase H from Oenococcus oeni (strain ATCC BAA-331 / PSU-1).